The following is a 180-amino-acid chain: MDLPDVTAVQHESRQLALASSAAELHGGLCGWLSGGGADSADWLARILADSGQVAPRQGGALDQLRQATVAQLEDRDFAFELLLVEDGAPLPARTDALFDWCRAFLGGFGLAAQQRPALSEEGEEALQDLARLAQASSDDFDTADEDDTALAEIEEFVRVAVLLLHGDCVMGPRFRQRLN.

This sequence belongs to the UPF0149 family.

The polypeptide is UPF0149 protein XAC3406 (Xanthomonas axonopodis pv. citri (strain 306)).